Reading from the N-terminus, the 894-residue chain is Valine--tRNA ligase (894 aa).

The 'HIGH' region motif lies at P48–H58. Residues K527–S531 carry the 'KMSKS' region motif. Position 530 (K530) interacts with ATP. Positions L827–S852 form a coiled coil.

It belongs to the class-I aminoacyl-tRNA synthetase family. ValS type 1 subfamily. In terms of assembly, monomer.

The protein resides in the cytoplasm. It catalyses the reaction tRNA(Val) + L-valine + ATP = L-valyl-tRNA(Val) + AMP + diphosphate. Functionally, catalyzes the attachment of valine to tRNA(Val). As ValRS can inadvertently accommodate and process structurally similar amino acids such as threonine, to avoid such errors, it has a 'posttransfer' editing activity that hydrolyzes mischarged Thr-tRNA(Val) in a tRNA-dependent manner. The polypeptide is Valine--tRNA ligase (Bdellovibrio bacteriovorus (strain ATCC 15356 / DSM 50701 / NCIMB 9529 / HD100)).